The following is a 371-amino-acid chain: Ferrochelatase (371 aa).

Fe cation is bound by residues histidine 218 and glutamate 299.

This sequence belongs to the ferrochelatase family.

It localises to the cytoplasm. The enzyme catalyses heme b + 2 H(+) = protoporphyrin IX + Fe(2+). The protein operates within porphyrin-containing compound metabolism; protoheme biosynthesis; protoheme from protoporphyrin-IX: step 1/1. In terms of biological role, catalyzes the ferrous insertion into protoporphyrin IX. This chain is Ferrochelatase, found in Cupriavidus necator (strain ATCC 17699 / DSM 428 / KCTC 22496 / NCIMB 10442 / H16 / Stanier 337) (Ralstonia eutropha).